A 707-amino-acid chain; its full sequence is Integrator complex subunit 13 (707 aa).

The segment covering 565–625 has biased composition (basic and acidic residues); sequence PPEEEERKKR…AEAEVIKDSP (61 aa). A disordered region spans residues 565–651; sequence PPEEEERKKR…TGPAEKSKGP (87 aa). The stretch at 567 to 622 forms a coiled coil; that stretch reads EEEERKKRGRKREDKEEKAEKPPKENEHEKKWQESERVKSVLDREKEDLAEAEVIK. Residues 573–583 carry the Nuclear localization signal (NLS) motif; sequence KRGRKREDKEE. A cleavage module binding motif (CMBM) region spans residues 650-695; the sequence is GPMSLLSLWSSRINTANSRKHQEFVGRLNSVNNKAELYQHLKEENG.

This sequence belongs to the Integrator subunit 13 family. In terms of assembly, component of the Integrator complex, composed of core subunits INTS1, INTS2, INTS3, INTS4, INTS5, INTS6, INTS7, INTS8, INTS9/RC74, INTS10, INTS11/CPSF3L, INTS12, INTS13, INTS14 and INTS15. The core complex associates with protein phosphatase 2A subunits PPP2CA and PPP2R1A, to form the Integrator-PP2A (INTAC) complex. INTS13 is part of the tail subcomplex, composed of INTS10, INTS13, INTS14 and INTS15.

The protein resides in the nucleus. It localises to the cytoplasm. Component of the integrator complex, a multiprotein complex that terminates RNA polymerase II (Pol II) transcription in the promoter-proximal region of genes. The integrator complex provides a quality checkpoint during transcription elongation by driving premature transcription termination of transcripts that are unfavorably configured for transcriptional elongation: the complex terminates transcription by (1) catalyzing dephosphorylation of the C-terminal domain (CTD) of Pol II subunit POLR2A/RPB1 and SUPT5H/SPT5, (2) degrading the exiting nascent RNA transcript via endonuclease activity and (3) promoting the release of Pol II from bound DNA. The integrator complex is also involved in terminating the synthesis of non-coding Pol II transcripts, such as enhancer RNAs (eRNAs), small nuclear RNAs (snRNAs), telomerase RNAs and long non-coding RNAs (lncRNAs). Within the integrator complex, INTS13 is part of the integrator tail module and acts as a platform for the recruitment of transcription factors at promoters. The chain is Integrator complex subunit 13 from Xenopus tropicalis (Western clawed frog).